The primary structure comprises 168 residues: Gastrula zinc finger protein XlCGF7.1 (168 aa).

C2H2-type zinc fingers lie at residues 6-28, 34-56, 62-84, 90-112, 118-140, and 146-168; these read FTCTECGKGFSDKSNLRSHQRTH, FTCTECGKSFSQKIGLHNHLKCH, FMCTECGKSFSNKSNLHTHRKIH, YICTECGKTFPRKKNLQSHQTVH, FTCSECGKCFSQKKNLHTHQKIH, and FKCNECGQAFLRKRNLLSHERIH.

Belongs to the krueppel C2H2-type zinc-finger protein family.

It localises to the nucleus. Functionally, may be involved in transcriptional regulation. This Xenopus laevis (African clawed frog) protein is Gastrula zinc finger protein XlCGF7.1.